The following is a 166-amino-acid chain: Large ribosomal subunit protein uL10 (166 aa).

It belongs to the universal ribosomal protein uL10 family. As to quaternary structure, part of the ribosomal stalk of the 50S ribosomal subunit. The N-terminus interacts with L11 and the large rRNA to form the base of the stalk. The C-terminus forms an elongated spine to which L12 dimers bind in a sequential fashion forming a multimeric L10(L12)X complex.

Forms part of the ribosomal stalk, playing a central role in the interaction of the ribosome with GTP-bound translation factors. The sequence is that of Large ribosomal subunit protein uL10 from Lysinibacillus sphaericus (strain C3-41).